A 393-amino-acid chain; its full sequence is NAD(P)H-quinone oxidoreductase subunit H, chloroplastic (393 aa).

The protein belongs to the complex I 49 kDa subunit family. In terms of assembly, NDH is composed of at least 16 different subunits, 5 of which are encoded in the nucleus.

It is found in the plastid. It localises to the chloroplast thylakoid membrane. It carries out the reaction a plastoquinone + NADH + (n+1) H(+)(in) = a plastoquinol + NAD(+) + n H(+)(out). It catalyses the reaction a plastoquinone + NADPH + (n+1) H(+)(in) = a plastoquinol + NADP(+) + n H(+)(out). NDH shuttles electrons from NAD(P)H:plastoquinone, via FMN and iron-sulfur (Fe-S) centers, to quinones in the photosynthetic chain and possibly in a chloroplast respiratory chain. The immediate electron acceptor for the enzyme in this species is believed to be plastoquinone. Couples the redox reaction to proton translocation, and thus conserves the redox energy in a proton gradient. This chain is NAD(P)H-quinone oxidoreductase subunit H, chloroplastic, found in Arabis hirsuta (Hairy rock-cress).